The primary structure comprises 626 residues: Chaperone protein HtpG (626 aa).

An a; substrate-binding region spans residues 1–341; sequence METKQFKAES…SEDLSLNISR (341 aa). The segment at 342-552 is b; that stretch reads EILQHDRQLK…EGELSIEMEK (211 aa). The tract at residues 490 to 509 is disordered; sequence DLGIEGEEKENTSNSDDKEN. Over residues 498-509 the composition is skewed to basic and acidic residues; that stretch reads KENTSNSDDKEN. Residues 553–626 form a c region; it reads VLNAMPNNQN…FTNNICKIMK (74 aa).

The protein belongs to the heat shock protein 90 family. Homodimer.

It localises to the cytoplasm. Its function is as follows. Molecular chaperone. Has ATPase activity. The chain is Chaperone protein HtpG from Clostridium botulinum (strain ATCC 19397 / Type A).